Consider the following 154-residue polypeptide: Interleukin-2 (154 aa).

The signal sequence occupies residues 1–20; sequence MYRMQLLSCIALSLALITNS. An O-linked (GalNAc...) threonine glycan is attached at Thr23. Cys78 and Cys126 are disulfide-bonded.

This sequence belongs to the IL-2 family.

The protein resides in the secreted. Functionally, cytokine produced by activated CD4-positive helper T-cells and to a lesser extend activated CD8-positive T-cells and natural killer (NK) cells that plays pivotal roles in the immune response and tolerance. Binds to a receptor complex composed of either the high-affinity trimeric IL-2R (IL2RA/CD25, IL2RB/CD122 and IL2RG/CD132) or the low-affinity dimeric IL-2R (IL2RB and IL2RG). Interaction with the receptor leads to oligomerization and conformation changes in the IL-2R subunits resulting in downstream signaling starting with phosphorylation of JAK1 and JAK3. In turn, JAK1 and JAK3 phosphorylate the receptor to form a docking site leading to the phosphorylation of several substrates including STAT5. This process leads to activation of several pathways including STAT, phosphoinositide-3-kinase/PI3K and mitogen-activated protein kinase/MAPK pathways. Functions as a T-cell growth factor and can increase NK-cell cytolytic activity as well. Promotes strong proliferation of activated B-cells and subsequently immunoglobulin production. Plays a pivotal role in regulating the adaptive immune system by controlling the survival and proliferation of regulatory T-cells, which are required for the maintenance of immune tolerance. Moreover, participates in the differentiation and homeostasis of effector T-cell subsets, including Th1, Th2, Th17 as well as memory CD8-positive T-cells. This chain is Interleukin-2 (IL2), found in Saimiri sciureus (Common squirrel monkey).